Consider the following 510-residue polypeptide: Cytochrome P450 4A6 (510 aa).

Positions 1-4 (MSVS) are excised as a propeptide. The heme site is built by E321 and C457.

The protein belongs to the cytochrome P450 family. Heme serves as cofactor. As to expression, liver; kidney.

The protein localises to the endoplasmic reticulum membrane. It is found in the microsome membrane. It carries out the reaction an omega-methyl-long-chain fatty acid + reduced [NADPH--hemoprotein reductase] + O2 = an omega-hydroxy-long-chain fatty acid + oxidized [NADPH--hemoprotein reductase] + H2O + H(+). Functionally, cytochromes P450 are a group of heme-thiolate monooxygenases. In liver microsomes, this enzyme is involved in an NADPH-dependent electron transport pathway. It oxidizes a variety of structurally unrelated compounds, including steroids, fatty acids, and xenobiotics. Its function is as follows. The kidney P-450 system is rather specialized for the omega-hydroxylation of fatty acids. Both P450-KA1 and P450-KA2 catalyze the omega- and (omega-1)-hydroxylation of various fatty acids with no drug-metabolizing activity, and hydroxylate prostaglandin A1 and A2 solely at the omega-position. The protein is Cytochrome P450 4A6 (CYP4A6) of Oryctolagus cuniculus (Rabbit).